Reading from the N-terminus, the 1035-residue chain is Kinesin-like protein KIN-4A (1035 aa).

One can recognise a Kinesin motor domain in the interval 11–370 (SVKVAVHIRP…LKYANRARNI (360 aa)). 90–97 (GQTGSGKT) lines the ATP pocket. Coiled-coil stretches lie at residues 408-436 (CAEVQALKERIVWLETANEELCRELHEYR), 504-707 (QNSM…RKSS), and 881-911 (KEIVGLLRQSELRRKEAEKELKLREQAIATS). The interval 704 to 724 (RKSSPREHSAGTNGFGTNGQT) is disordered.

Belongs to the TRAFAC class myosin-kinesin ATPase superfamily. Kinesin family. KIN-4 subfamily. In terms of assembly, homodimer. In terms of tissue distribution, expressed in stems and flowers. Detected in cells undergoing secondary wall deposition including developing interfascicular fibers and xylem cells, but also in dividing cells and expanding/elongating parenchyma cells.

It localises to the cytoplasm. Its subcellular location is the cytoskeleton. Its function is as follows. Kinesin-like motor protein involved in the control of the oriented deposition of cellulose microfibrils. Its motor activity is directed toward the microtubule's plus end. It possesses the potential to drive long-distance transport of cargo along cortical microtubules. Regulates cell wall mechanics during cell elongation, by the regulation of primary and secondary walls deposition. Contributes to cortical microtubule-mediated trafficking of cell wall components. The polypeptide is Kinesin-like protein KIN-4A (Arabidopsis thaliana (Mouse-ear cress)).